Reading from the N-terminus, the 291-residue chain is uncharacterized protein (291 aa).

The next 4 membrane-spanning stretches (helical) occupy residues 13–33 (IILI…SITI), 84–104 (IVLF…IGII), 111–131 (LLHL…FIII), and 219–239 (LIYC…IYYL).

Its subcellular location is the cell membrane. This is an uncharacterized protein from Ureaplasma parvum serovar 3 (strain ATCC 700970).